The primary structure comprises 822 residues: Phenylalanine--tRNA ligase beta subunit (822 aa).

One can recognise a tRNA-binding domain in the interval 39–150 (ADRLVGFRTA…ETAPIGESYA (112 aa)). In terms of domain architecture, B5 spans 399-502 (DWKRTARLRF…RLYGLDNVPA (104 aa)). Mg(2+)-binding residues include D486, E489, and E490. An FDX-ACB domain is found at 728–821 (SPLQPVRRDF…VLKATGAVLR (94 aa)).

It belongs to the phenylalanyl-tRNA synthetase beta subunit family. Type 1 subfamily. As to quaternary structure, tetramer of two alpha and two beta subunits. It depends on Mg(2+) as a cofactor.

It localises to the cytoplasm. It carries out the reaction tRNA(Phe) + L-phenylalanine + ATP = L-phenylalanyl-tRNA(Phe) + AMP + diphosphate + H(+). This Gluconobacter oxydans (strain 621H) (Gluconobacter suboxydans) protein is Phenylalanine--tRNA ligase beta subunit.